The chain runs to 526 residues: Dolichyl pyrophosphate Glc1Man9GlcNAc2 alpha-1,3-glucosyltransferase (526 aa).

The next 11 membrane-spanning stretches (helical) occupy residues 9 to 29 (AGGH…CLLI), 108 to 128 (FSVI…CKCI), 143 to 163 (FILS…HIHF), 188 to 208 (GALL…VAPA), 238 to 258 (VTSL…PFLA), 334 to 354 (PLAT…CLWF), 361 to 380 (GFLR…GWHV), 400 to 422 (AGDA…PLLF), 427 to 449 (LPIK…KTLF), 461 to 481 (TVYL…LPFT), and 487 to 507 (YPFI…TYAW).

The protein belongs to the ALG6/ALG8 glucosyltransferase family.

Its subcellular location is the endoplasmic reticulum membrane. The catalysed reaction is an alpha-D-Glc-(1-&gt;3)-alpha-D-Man-(1-&gt;2)-alpha-D-Man-(1-&gt;2)-alpha-D-Man-(1-&gt;3)-[alpha-D-Man-(1-&gt;2)-alpha-D-Man-(1-&gt;3)-[alpha-D-Man-(1-&gt;2)-alpha-D-Man-(1-&gt;6)]-alpha-D-Man-(1-&gt;6)]-beta-D-Man-(1-&gt;4)-beta-D-GlcNAc-(1-&gt;4)-alpha-D-GlcNAc-diphospho-di-trans,poly-cis-dolichol + a di-trans,poly-cis-dolichyl beta-D-glucosyl phosphate = an alpha-D-Glc-(1-&gt;3)-alpha-D-Glc-(1-&gt;3)-alpha-D-Man-(1-&gt;2)-alpha-D-Man-(1-&gt;2)-alpha-D-Man-(1-&gt;3)-[alpha-D-Man-(1-&gt;2)-alpha-D-Man-(1-&gt;3)-[alpha-D-Man-(1-&gt;2)-alpha-D-Man-(1-&gt;6)]-alpha-D-Man-(1-&gt;6)]-beta-D-Man-(1-&gt;4)-beta-D-GlcNAc-(1-&gt;4)-alpha-D-GlcNAc-diphospho-di-trans,poly-cis-dolichol + a di-trans,poly-cis-dolichyl phosphate + H(+). It functions in the pathway protein modification; protein glycosylation. Its function is as follows. Dolichyl pyrophosphate Glc1Man9GlcNAc2 alpha-1,3-glucosyltransferase that operates in the biosynthetic pathway of dolichol-linked oligosaccharides, the glycan precursors employed in protein asparagine (N)-glycosylation. The assembly of dolichol-linked oligosaccharides begins on the cytosolic side of the endoplasmic reticulum membrane and finishes in its lumen. The sequential addition of sugars to dolichol pyrophosphate produces dolichol-linked oligosaccharides containing fourteen sugars, including two GlcNAcs, nine mannoses and three glucoses. Once assembled, the oligosaccharide is transferred from the lipid to nascent proteins by oligosaccharyltransferases. In the lumen of the endoplasmic reticulum, adds the second glucose residue from dolichyl phosphate glucose (Dol-P-Glc) onto the lipid-linked oligosaccharide intermediate Glc(1)Man(9)GlcNAc(2)-PP-Dol to produce Glc(2)Man(9)GlcNAc(2)-PP-Dol. Glc(2)Man(9)GlcNAc(2)-PP-Dol is a substrate for ALG10, the following enzyme in the biosynthetic pathway. Required for PKD1/Polycystin-1 maturation and localization to the plasma membrane of the primary cilia. The polypeptide is Dolichyl pyrophosphate Glc1Man9GlcNAc2 alpha-1,3-glucosyltransferase (Mus musculus (Mouse)).